Reading from the N-terminus, the 312-residue chain is Methionyl-tRNA formyltransferase (312 aa).

109 to 112 lines the (6S)-5,6,7,8-tetrahydrofolate pocket; sequence SLLP.

The protein belongs to the Fmt family.

It carries out the reaction L-methionyl-tRNA(fMet) + (6R)-10-formyltetrahydrofolate = N-formyl-L-methionyl-tRNA(fMet) + (6S)-5,6,7,8-tetrahydrofolate + H(+). Functionally, attaches a formyl group to the free amino group of methionyl-tRNA(fMet). The formyl group appears to play a dual role in the initiator identity of N-formylmethionyl-tRNA by promoting its recognition by IF2 and preventing the misappropriation of this tRNA by the elongation apparatus. The polypeptide is Methionyl-tRNA formyltransferase (Listeria welshimeri serovar 6b (strain ATCC 35897 / DSM 20650 / CCUG 15529 / CIP 8149 / NCTC 11857 / SLCC 5334 / V8)).